We begin with the raw amino-acid sequence, 331 residues long: N-acetyl-alpha-D-glucosaminyl-diphospho-ditrans,octacis-undecaprenol 4-epimerase (331 aa).

Residues 13–14, 34–39, 47–48, S109, Y132, and K136 contribute to the NAD(+) site; these read FV, QQSHFY, and DV. The substrate site is built by S109 and Y132. Y132 acts as the Proton acceptor in catalysis. Residues 183 to 184 and 199 to 201 each bind substrate; these read GK and YVG.

It belongs to the NAD(P)-dependent epimerase/dehydratase family. The cofactor is NAD(+).

Its subcellular location is the cell membrane. It catalyses the reaction N-acetyl-alpha-D-glucosaminyl-di-trans,octa-cis-undecaprenyl diphosphate = N-acetyl-alpha-D-galactosaminyl-di-trans,octa-cis-undecaprenyl diphosphate. Its pathway is bacterial outer membrane biogenesis; LPS O-antigen biosynthesis. Involved in biosynthesis of the repeating tetrasaccharide unit of the O-antigen. Catalyzes the reversible epimerization of the hydroxyl group at position C4 of undecaprenyl pyrophosphate-N-acetylglucosamine (UndPP-GlcNAc) to yield undecaprenyl pyrophosphate-N-acetylgalactosamine (UndPP-GalNAc). The protein is N-acetyl-alpha-D-glucosaminyl-diphospho-ditrans,octacis-undecaprenol 4-epimerase of Escherichia coli O157:H7.